The chain runs to 174 residues: U1 small nuclear ribonucleoprotein C (174 aa).

The segment at 4-36 adopts a Matrin-type zinc-finger fold; the sequence is YYCDYCDKYLTHDSPSVRKSHTVGKQHKLAVQL. 2 stretches are compositionally biased toward low complexity: residues 82-109 and 122-140; these read QQQQ…QQGM and PHQF…FQPP. Residues 82–174 form a disordered region; sequence QQQQQQQQQQ…QHNQPTIPGL (93 aa). The span at 141–163 shows a compositional bias: basic residues; sequence HHQHHPHQQHQQHQQHQHQHQHQ. Over residues 164–174 the composition is skewed to low complexity; that stretch reads QQHNQPTIPGL.

The protein belongs to the U1 small nuclear ribonucleoprotein C family. As to quaternary structure, component of the U1 snRNP. The U1 snRNP is composed of the U1 snRNA and the 7 core Sm proteins SNRPB, SNRPD1, SNRPD2, SNRPD3, SNRPE, SNRPF and SNRPG that assemble in a heptameric protein ring on the Sm site of the small nuclear RNA to form the core snRNP, and at least 3 U1 snRNP-specific proteins SNRNP70/U1-70K, SNRPA/U1-A and SNRPC/U1-C. SNRPC/U1-C interacts with U1 snRNA and the 5' splice-site region of the pre-mRNA.

The protein localises to the nucleus. Its function is as follows. Component of the spliceosomal U1 snRNP, which is essential for recognition of the pre-mRNA 5' splice-site and the subsequent assembly of the spliceosome. SNRPC/U1-C is directly involved in initial 5' splice-site recognition for both constitutive and regulated alternative splicing. The interaction with the 5' splice-site seems to precede base-pairing between the pre-mRNA and the U1 snRNA. Stimulates commitment or early (E) complex formation by stabilizing the base pairing of the 5' end of the U1 snRNA and the 5' splice-site region. This chain is U1 small nuclear ribonucleoprotein C, found in Dictyostelium discoideum (Social amoeba).